The sequence spans 1176 residues: Myosin light chain kinase, smooth muscle (1176 aa).

An actin-binding (calcium/calmodulin-sensitive) region spans residues 1 to 41 (MDFRANLQRQVKPKTLSEEERKVHGPQQVDFRSVLAKKGTP). A disordered region spans residues 1 to 354 (MDFRANLQRQ…SEKRPESRGT (354 aa)). Residues 26 to 41 (PQQVDFRSVLAKKGTP) form a calmodulin-binding region. The segment covering 43–55 (TPVPEKVPPPKPA) has biased composition (pro residues). 16 consecutive repeat copies span residues 100-111 (FLKPVGNAKLAD), 112-123 (TPKPLSSTKPAE), 124-135 (TPKPLGNVKPAE), 136-147 (TPKPLGSTKPAE), 148-159 (TPKPLGSTKPAE), 160-171 (TPKPLGNVKPAE), 172-183 (TPKPLGNIKPTE), 184-195 (TPKPLGSTKPAE), 196-207 (TPKPLGSTKPAE), 208-219 (TPKPLGNVKPAE), 220-231 (TPKPLGNVKPAE), 232-243 (TPKPLGNVKPAE), 244-255 (TPKPVSNAKPAE), 256-267 (TLKPVGNAKPAE), 268-279 (TPKPLSNVKPAE), and 280-291 (TPKLVGNAKPAE). The segment at 100-291 (FLKPVGNAKL…KLVGNAKPAE (192 aa)) is 16 X 12 AA tandem repeats. At S202 the chain carries Phosphoserine. Positions 319 to 721 (PTGKEELKKE…TVTVNTEQKV (403 aa)) are actin-binding (calcium/calmodulin-insensitive). The span at 320–335 (TGKEELKKEIKNDVNC) shows a compositional bias: basic and acidic residues. The Ig-like C2-type 1 domain occupies 356-444 (PTFEEKLQDL…GQAESSCQVT (89 aa)). C377 and C428 are joined by a disulfide. The interval 448–497 (PDAPTSENAKAPEMKARRPKSSLPPVLGTESDATVKKKPAPKTPPKAAMP) is disordered. Residues 498–586 (PQIIQFPEDQ…GSRQAQVNLT (89 aa)) form the Ig-like C2-type 2 domain. In terms of domain architecture, Fibronectin type-III spans 594 to 686 (PAGTPCASDI…QESELTALGE (93 aa)). The tract at residues 673 to 707 (SEPSQESELTALGEKPEEEPKDEVEVSDDDEKEPE) is disordered. Residues 688 to 706 (PEEEPKDEVEVSDDDEKEP) show a composition bias toward acidic residues. S699 is modified (phosphoserine). At Y710 the chain carries Phosphotyrosine; by ABL1. The Protein kinase domain maps to 725-980 (YDIEERLGSG…CTQCLQHPWL (256 aa)). Residues 731–739 (LGSGKFGQV) and K754 contribute to the ATP site. Phosphotyrosine; by ABL1 is present on Y836. D846 serves as the catalytic Proton acceptor. Y896 is subject to Phosphotyrosine; by ABL1. Residues 972-1035 (TQCLQHPWLM…SGLSGRKSST (64 aa)) form a calmodulin-binding region. S1020, S1021, S1033, S1034, and S1037 each carry phosphoserine. Residue T1039 is modified to Phosphothreonine. The residue at position 1040 (S1040) is a Phosphoserine. The region spanning 1069-1158 (PYFSKTIRDL…GEATCTAELI (90 aa)) is the Ig-like C2-type 3 domain. The cysteines at positions 1090 and 1142 are disulfide-linked.

Belongs to the protein kinase superfamily. CAMK Ser/Thr protein kinase family. As to quaternary structure, all isoforms including Telokin bind calmodulin. Interacts with SVIL. Interacts with CTTN; this interaction is reduced during thrombin-induced endothelial cell (EC) contraction but is promoted by the barrier-protective agonist sphingosine 1-phosphate (S1P) within lamellipodia. A complex made of ABL1, CTTN and MYLK regulates cortical actin-based cytoskeletal rearrangement critical to sphingosine 1-phosphate (S1P)-mediated endothelial cell (EC) barrier enhancement. Binds to NAA10/ARD1 and PTK2B/PYK2. Mg(2+) serves as cofactor. Requires Ca(2+) as cofactor. Post-translationally, the C-terminus is deglutamylated by AGTPBP1/CCP1, AGBL1/CCP4 and AGBL4/CCP6, leading to the formation of Myosin light chain kinase, smooth muscle, deglutamylated form. The consequences of C-terminal deglutamylation are unknown. Can probably be down-regulated by phosphorylation. Tyrosine phosphorylation by ABL1 increases kinase activity, reverses MLCK-mediated inhibition of Arp2/3-mediated actin polymerization, and enhances CTTN-binding. Phosphorylation by SRC promotes CTTN binding.

The protein localises to the cytoplasm. It localises to the cell projection. It is found in the lamellipodium. Its subcellular location is the cleavage furrow. The protein resides in the cytoskeleton. The protein localises to the stress fiber. The enzyme catalyses L-seryl-[myosin light chain] + ATP = O-phospho-L-seryl-[myosin light chain] + ADP + H(+). It carries out the reaction L-threonyl-[myosin light chain] + ATP = O-phospho-L-threonyl-[myosin light chain] + ADP + H(+). Its function is as follows. Calcium/calmodulin-dependent myosin light chain kinase implicated in smooth muscle contraction via phosphorylation of myosin light chains (MLC). Also regulates actin-myosin interaction through a non-kinase activity. Phosphorylates PTK2B/PYK2 and myosin light-chains. Involved in the inflammatory response (e.g. apoptosis, vascular permeability, leukocyte diapedesis), cell motility and morphology, airway hyperreactivity and other activities relevant to asthma. Required for tonic airway smooth muscle contraction that is necessary for physiological and asthmatic airway resistance. Necessary for gastrointestinal motility. Implicated in the regulation of endothelial as well as vascular permeability, probably via the regulation of cytoskeletal rearrangements. In the nervous system it has been shown to control the growth initiation of astrocytic processes in culture and to participate in transmitter release at synapses formed between cultured sympathetic ganglion cells. Critical participant in signaling sequences that result in fibroblast apoptosis. Plays a role in the regulation of epithelial cell survival. Required for epithelial wound healing, especially during actomyosin ring contraction during purse-string wound closure. Mediates RhoA-dependent membrane blebbing. Triggers TRPC5 channel activity in a calcium-dependent signaling, by inducing its subcellular localization at the plasma membrane. Promotes cell migration (including tumor cells) and tumor metastasis. PTK2B/PYK2 activation by phosphorylation mediates ITGB2 activation and is thus essential to trigger neutrophil transmigration during acute lung injury (ALI). May regulate optic nerve head astrocyte migration. Probably involved in mitotic cytoskeletal regulation. Regulates tight junction probably by modulating ZO-1 exchange in the perijunctional actomyosin ring. Mediates burn-induced microvascular barrier injury; triggers endothelial contraction in the development of microvascular hyperpermeability by phosphorylating MLC. Essential for intestinal barrier dysfunction. Mediates Giardia spp.-mediated reduced epithelial barrier function during giardiasis intestinal infection via reorganization of cytoskeletal F-actin and tight junctional ZO-1. Necessary for hypotonicity-induced Ca(2+) entry and subsequent activation of volume-sensitive organic osmolyte/anion channels (VSOAC) in cervical cancer cells. The chain is Myosin light chain kinase, smooth muscle (MYLK) from Bos taurus (Bovine).